The chain runs to 250 residues: 3-deoxy-manno-octulosonate cytidylyltransferase (250 aa).

It belongs to the KdsB family.

It localises to the cytoplasm. It carries out the reaction 3-deoxy-alpha-D-manno-oct-2-ulosonate + CTP = CMP-3-deoxy-beta-D-manno-octulosonate + diphosphate. The protein operates within nucleotide-sugar biosynthesis; CMP-3-deoxy-D-manno-octulosonate biosynthesis; CMP-3-deoxy-D-manno-octulosonate from 3-deoxy-D-manno-octulosonate and CTP: step 1/1. It functions in the pathway bacterial outer membrane biogenesis; lipopolysaccharide biosynthesis. In terms of biological role, activates KDO (a required 8-carbon sugar) for incorporation into bacterial lipopolysaccharide in Gram-negative bacteria. The protein is 3-deoxy-manno-octulosonate cytidylyltransferase of Yersinia enterocolitica serotype O:8 / biotype 1B (strain NCTC 13174 / 8081).